The chain runs to 506 residues: MEDHQHVPIDIQTSKLLDWLVDRRHCSLKWQSLVLTIREKINAAIQDMPESEEIAQLLSGSYIHYFHCLRILDLLKGTEASTKNIFGRYSSQRMKDWQEIIALYEKDNTYLVELSSLLVRNVNYEIPSLKKQIAKCQQLQQEYSRKEEECQAGAAEMREQFYHSCKQYGITGENVRGELLALVKDLPSQLAEIGAAAQQSLGEAIDVYQASVGFVCESPTEQVLPMLRFVQKRGNSTVYEWRTGTEPSVVERPHLEELPEQVAEDAIDWGDFGVEAVSEGTDSGISAEAAGIDWGIFPESDSKDPGGDGIDWGDDAVALQITVLEAGTQAPEGVARGPDALTLLEYTETRNQFLDELMELEIFLAQRAVELSEEADVLSVSQFQLAPAILQGQTKEKMVTMVSVLEDLIGKLTSLQLQHLFMILASPRYVDRVTEFLQQKLKQSQLLALKKELMVQKQQEALEEQAALEPKLDLLLEKTKELQKLIEADISKRYSGRPVNLMGTSL.

Short sequence motifs (shuffled ATG8-binding motif) lie at residues 267-270, 292-295, and 310-313; these read IDWG. A required for interaction with UFL1 and mediates interaction with CHEK1 region spans residues 269–506; the sequence is WGDFGVEAVS…RPVNLMGTSL (238 aa). The segment at 355-370 is RPL10a-binding domain (RBD); sequence DELMELEIFLAQRAVE. Lys-450 participates in a covalent cross-link: Glycyl lysine isopeptide (Lys-Gly) (interchain with G-Cter in SUMO2).

The protein belongs to the CDK5RAP3 family. As to quaternary structure, substrate adapter component of the UFM1 ribosome E3 ligase (UREL) complex, composed of UFL1, DDRGK1 and CDK5RAP3. Interaction with UFL1 anchors CDK5RAP3 in the cytoplasm, preventing its translocation to the nucleus which allows expression of the CCND1 cyclin and progression of cells through the G1/S transition. Interacts with ATG8 family proteins MAP1LC3A, MAP1LC3B, GABARAP, GABARAPL1 and GABARAPL2. Interacts with CDK5R1; competes with CDK5RAP1 and CDK5RAP2. Interacts with RELA. Interacts with CHEK1; may negatively regulate CHEK1 and thereby stimulate entry into mitosis. Interacts with CDKN2A/ARF and MDM2; forms a ternary complex involved in regulation of p53/TP53. Interacts with MAPK14. Interacts with CCNB1. Interacts with TUBG1; may regulate CDK5RAP3 in mitotic G2/M transition checkpoint. (Microbial infection) Interacts with hepatitis B virus large envelope protein mutant pre-s2; promotes mitotic entry. Post-translationally, may be phosphorylated by CDK5. In terms of processing, ubiquitinated. Probably triggers proteasomal degradation and is negatively regulated by UFL1. May be ufmylated. Post-translationally, cleaved by caspases early during apoptosis, the resulting peptides may play a role in rupture of the nuclear envelope. As to expression, ubiquitously expressed. Expressed in heart, brain, placenta, lung, liver, skeletal muscle, kidney and pancreas. Isoform 3 is expressed in kidney, liver, skeletal muscle and placenta.

The protein localises to the endoplasmic reticulum membrane. It localises to the cytoplasm. It is found in the nucleus. Its subcellular location is the cytoskeleton. The protein resides in the microtubule organizing center. The protein localises to the centrosome. Functionally, substrate adapter of E3 ligase complexes mediating ufmylation, the covalent attachment of the ubiquitin-like modifier UFM1 to substrate proteins, and which is involved in various processes, such as ribosome recycling and reticulophagy (also called ER-phagy). As part of the UREL complex, plays a key role in ribosome recycling by promoting mono-ufmylation of RPL26/uL24 subunit of the 60S ribosome. Ufmylation of RPL26/uL24 occurs on free 60S ribosomes following ribosome dissociation: it weakens the junction between post-termination 60S subunits and SEC61 translocons, promoting release and recycling of the large ribosomal subunit from the endoplasmic reticulum membrane. Ufmylation of RPL26/uL24 and subsequent 60S ribosome recycling either take place after normal termination of translation or after ribosome stalling during cotranslational translocation at the endoplasmic reticulum. Within the UREL complex, CDK5RAP3 acts as a substrate adapter that constrains UFL1 ligase activity to mono-ufmylate RPL26/uL24 at 'Lys-134'. The UREL complex is also involved in reticulophagy in response to endoplasmic reticulum stress by promoting ufmylation of proteins such as CYB5R3, thereby promoting lysosomal degradation of ufmylated proteins. Also acts as a regulator of transcription: negatively regulates NF-kappa-B-mediated gene transcription through the control of RELA phosphorylation. Also regulates mitotic G2/M transition checkpoint and mitotic G2 DNA damage checkpoint. Through its interaction with CDKN2A/ARF and MDM2 may induce MDM2-dependent p53/TP53 ubiquitination, stabilization and activation in the nucleus, thereby promoting G1 cell cycle arrest and inhibition of cell proliferation. May also play a role in the rupture of the nuclear envelope during apoptosis. May regulate MAPK14 activity by regulating its dephosphorylation by PPM1D/WIP1. Required for liver development. (Microbial infection) May be negatively regulated by hepatitis B virus large envelope protein mutant pre-s2 to promote mitotic entry. The polypeptide is CDK5 regulatory subunit-associated protein 3 (Homo sapiens (Human)).